The following is a 213-amino-acid chain: Ferric nitrobindin-like protein (213 aa).

Residues 17–42 (VNLAAEQSKSTSDKNLPEFGDMPIPD) are disordered. Positions 65–71 (GVWRGQG) match the GXWXGXG motif.

Belongs to the nitrobindin family.

This Corynebacterium jeikeium (strain K411) protein is Ferric nitrobindin-like protein.